The primary structure comprises 181 residues: Shikimate kinase (181 aa).

An ATP-binding site is contributed by 17-22; it reads GAGKTT. Residue Thr21 coordinates Mg(2+). Substrate-binding residues include Asp39, Arg63, and Gly85. Arg122 serves as a coordination point for ATP. Arg141 provides a ligand contact to substrate.

This sequence belongs to the shikimate kinase family. Monomer. Requires Mg(2+) as cofactor.

It localises to the cytoplasm. It catalyses the reaction shikimate + ATP = 3-phosphoshikimate + ADP + H(+). It participates in metabolic intermediate biosynthesis; chorismate biosynthesis; chorismate from D-erythrose 4-phosphate and phosphoenolpyruvate: step 5/7. Its function is as follows. Catalyzes the specific phosphorylation of the 3-hydroxyl group of shikimic acid using ATP as a cosubstrate. The chain is Shikimate kinase from Nostoc sp. (strain PCC 7120 / SAG 25.82 / UTEX 2576).